The chain runs to 185 residues: Ribosome-recycling factor (185 aa).

It belongs to the RRF family.

The protein localises to the cytoplasm. Responsible for the release of ribosomes from messenger RNA at the termination of protein biosynthesis. May increase the efficiency of translation by recycling ribosomes from one round of translation to another. This chain is Ribosome-recycling factor, found in Histophilus somni (strain 2336) (Haemophilus somnus).